A 330-amino-acid chain; its full sequence is Aspartate--ammonia ligase (330 aa).

This sequence belongs to the class-II aminoacyl-tRNA synthetase family. AsnA subfamily.

It is found in the cytoplasm. The catalysed reaction is L-aspartate + NH4(+) + ATP = L-asparagine + AMP + diphosphate + H(+). It functions in the pathway amino-acid biosynthesis; L-asparagine biosynthesis; L-asparagine from L-aspartate (ammonia route): step 1/1. The polypeptide is Aspartate--ammonia ligase (Actinobacillus succinogenes (strain ATCC 55618 / DSM 22257 / CCUG 43843 / 130Z)).